A 297-amino-acid polypeptide reads, in one-letter code: Bifunctional protein FolD (297 aa).

NADP(+)-binding positions include 166-168 (GRS), S191, and I232.

It belongs to the tetrahydrofolate dehydrogenase/cyclohydrolase family. In terms of assembly, homodimer.

The enzyme catalyses (6R)-5,10-methylene-5,6,7,8-tetrahydrofolate + NADP(+) = (6R)-5,10-methenyltetrahydrofolate + NADPH. The catalysed reaction is (6R)-5,10-methenyltetrahydrofolate + H2O = (6R)-10-formyltetrahydrofolate + H(+). Its pathway is one-carbon metabolism; tetrahydrofolate interconversion. Functionally, catalyzes the oxidation of 5,10-methylenetetrahydrofolate to 5,10-methenyltetrahydrofolate and then the hydrolysis of 5,10-methenyltetrahydrofolate to 10-formyltetrahydrofolate. In Phenylobacterium zucineum (strain HLK1), this protein is Bifunctional protein FolD.